Here is a 676-residue protein sequence, read N- to C-terminus: MSFFWLFPFLLHLSFADSLSPLSAPVQNFIHLNHSCPSSILTYSRNSTYFTNLKTLLSSLSSRNASYSTGFQTATAGQAPDRVTGLFLCRGDVSQEVCRNCVAFSVKETLYWCPYNKEVVLYYDECMLRYSHRNILSTVTYDGSAILLNGANISSSNQNQVDEFRDLVSSTLNLAAVEAANSSKKFYTRKVITPQPLYLLVQCTPDLTRQDCLRCLQKSIKGMSLYRIGGRFFYPSCNSRYENYSFYNETATRSSSPPSLPPRSTPQQQLKLAPPPLISERGKGRNSSVIIVVVVPIIALLLLFVAFFSLRAKKTRTNYEREPLTEESDDITTAGSLQFDFKAIEAATNKFCETNKLGQGGFGEVYKGIFPSGVQVAVKRLSKTSGQGEREFANEVIVVAKLQHRNLVRLLGFCLERDERILVYEFVPNKSLDYFIFDSTMQSLLDWTRRYKIIGGIARGILYLHQDSRLTIIHRDLKAGNILLGDDMNAKIADFGMARIFGMDQTEANTRRIVGTYGYMSPEYAMYGQFSMKSDVYSFGVLVLEIISGKKNSNVYQMDGTSAGNLVTYTWRLWSNGSPLELVDPSFRDNYRINEVSRCIHIALLCVQEEAEDRPTMSAIVQMLTTSSIALAVPQRPGFFFRSSKHEQVGLVDRLSINTSALCSVDDASITNVTPR.

A signal peptide spans 1 to 16 (MSFFWLFPFLLHLSFA). The Extracellular segment spans residues 17–287 (DSLSPLSAPV…ISERGKGRNS (271 aa)). 2 consecutive Gnk2-homologous domains span residues 31-135 (HLNH…HRNI) and 146-246 (ILLN…NYSF). 7 N-linked (GlcNAc...) asparagine glycosylation sites follow: Asn33, Asn46, Asn64, Asn152, Asn181, Asn243, and Asn248. Residues 252-279 (TRSSSPPSLPPRSTPQQQLKLAPPPLIS) are disordered. Asn286 is a glycosylation site (N-linked (GlcNAc...) asparagine). The chain crosses the membrane as a helical span at residues 288–308 (SVIIVVVVPIIALLLLFVAFF). Residues 309–676 (SLRAKKTRTN…DASITNVTPR (368 aa)) are Cytoplasmic-facing. A Protein kinase domain is found at 351-631 (FCETNKLGQG…QMLTTSSIAL (281 aa)). ATP is bound by residues 357 to 365 (LGQGGFGEV) and Lys379. Tyr424 carries the post-translational modification Phosphotyrosine. Catalysis depends on Asp476, which acts as the Proton acceptor. Phosphothreonine is present on Thr516. Phosphotyrosine is present on Tyr524.

It belongs to the protein kinase superfamily. Ser/Thr protein kinase family. CRK subfamily.

It is found in the membrane. It carries out the reaction L-seryl-[protein] + ATP = O-phospho-L-seryl-[protein] + ADP + H(+). It catalyses the reaction L-threonyl-[protein] + ATP = O-phospho-L-threonyl-[protein] + ADP + H(+). The chain is Cysteine-rich receptor-like protein kinase 4 (CRK4) from Arabidopsis thaliana (Mouse-ear cress).